We begin with the raw amino-acid sequence, 33 residues long: uncharacterized protein (33 aa).

This is an uncharacterized protein from Staphylococcus aureus (strain MW2).